A 313-amino-acid polypeptide reads, in one-letter code: Methionyl-tRNA formyltransferase (313 aa).

113 to 116 contributes to the (6S)-5,6,7,8-tetrahydrofolate binding site; sequence SLLP.

This sequence belongs to the Fmt family.

The enzyme catalyses L-methionyl-tRNA(fMet) + (6R)-10-formyltetrahydrofolate = N-formyl-L-methionyl-tRNA(fMet) + (6S)-5,6,7,8-tetrahydrofolate + H(+). Functionally, attaches a formyl group to the free amino group of methionyl-tRNA(fMet). The formyl group appears to play a dual role in the initiator identity of N-formylmethionyl-tRNA by promoting its recognition by IF2 and preventing the misappropriation of this tRNA by the elongation apparatus. The sequence is that of Methionyl-tRNA formyltransferase from Acidithiobacillus ferrooxidans (strain ATCC 23270 / DSM 14882 / CIP 104768 / NCIMB 8455) (Ferrobacillus ferrooxidans (strain ATCC 23270)).